Reading from the N-terminus, the 378-residue chain is Succinyl-diaminopimelate desuccinylase (378 aa).

A Zn(2+)-binding site is contributed by His-68. The active site involves Asp-70. Asp-101 is a Zn(2+) binding site. Glu-135 serves as the catalytic Proton acceptor. Residues Glu-136, Glu-164, and His-350 each coordinate Zn(2+).

Belongs to the peptidase M20A family. DapE subfamily. In terms of assembly, homodimer. It depends on Zn(2+) as a cofactor. The cofactor is Co(2+).

The enzyme catalyses N-succinyl-(2S,6S)-2,6-diaminopimelate + H2O = (2S,6S)-2,6-diaminopimelate + succinate. It functions in the pathway amino-acid biosynthesis; L-lysine biosynthesis via DAP pathway; LL-2,6-diaminopimelate from (S)-tetrahydrodipicolinate (succinylase route): step 3/3. Functionally, catalyzes the hydrolysis of N-succinyl-L,L-diaminopimelic acid (SDAP), forming succinate and LL-2,6-diaminopimelate (DAP), an intermediate involved in the bacterial biosynthesis of lysine and meso-diaminopimelic acid, an essential component of bacterial cell walls. The polypeptide is Succinyl-diaminopimelate desuccinylase (Acinetobacter baumannii (strain ACICU)).